Here is a 242-residue protein sequence, read N- to C-terminus: Ribonuclease PH (242 aa).

Residues R87 and 125-127 (STR) contribute to the phosphate site.

This sequence belongs to the RNase PH family. Homohexameric ring arranged as a trimer of dimers.

It catalyses the reaction tRNA(n+1) + phosphate = tRNA(n) + a ribonucleoside 5'-diphosphate. Its function is as follows. Phosphorolytic 3'-5' exoribonuclease that plays an important role in tRNA 3'-end maturation. Removes nucleotide residues following the 3'-CCA terminus of tRNAs; can also add nucleotides to the ends of RNA molecules by using nucleoside diphosphates as substrates, but this may not be physiologically important. Probably plays a role in initiation of 16S rRNA degradation (leading to ribosome degradation) during starvation. The sequence is that of Ribonuclease PH from Synechococcus sp. (strain JA-3-3Ab) (Cyanobacteria bacterium Yellowstone A-Prime).